A 436-amino-acid polypeptide reads, in one-letter code: GTPase Der (436 aa).

EngA-type G domains follow at residues 4 to 167 (PVVA…PKGG) and 176 to 351 (IKFC…DNHA). GTP is bound by residues 10–17 (GRPNVGKS), 57–61 (DTGGI), 119–122 (NKID), 182–189 (GRPNVGKS), 229–233 (DTAGM), and 294–297 (NKWD). Residues 352 to 436 (MRVQTNVLNE…PIKIIARPRK (85 aa)) enclose the KH-like domain.

It belongs to the TRAFAC class TrmE-Era-EngA-EngB-Septin-like GTPase superfamily. EngA (Der) GTPase family. In terms of assembly, associates with the 50S ribosomal subunit.

Its function is as follows. GTPase that plays an essential role in the late steps of ribosome biogenesis. In Geobacillus kaustophilus (strain HTA426), this protein is GTPase Der.